Consider the following 419-residue polypeptide: MKLLSRDTRLVCELALCPLALVFWSILGVRALDNGLARTPTMGWLHWERFMCNLDCQEEPDACISEQLFMQMAELMVSDGWRDAGYDYLCIDDCWMAPERDSKGRLQADPQRFPSGIKHLANYVHSKGLKLGIYADVGNKTCAGFPGSFGSYDIDAQTFADWGVDLLKFDGCHCDSVVSLENGYKYMALALNRTGRSIVYSCEWPLYLRPFHKPNYTDIQYYCNHWRNFDDVYDSWESIKNILSWTVVYQKEIVEVAGPGSWNDPDMLVIGNFGLSWDQQVTQMALWAIMAAPLLMSNDLRQISSQAKALLQNKDVIAINQDPLGKQGYCFRKENHIEVWERPLSNLAWAVAVRNLQEIGGPCPYTIQISSLGRGLACNPGCIITQLLPEKVHLGFYEWTLTLKTRVNPSGTVLFRLER.

Residues 1–31 (MKLLSRDTRLVCELALCPLALVFWSILGVRA) form the signal peptide. 2 disulfides stabilise this stretch: cysteine 52–cysteine 94 and cysteine 56–cysteine 63. Asparagine 139 carries an N-linked (GlcNAc...) asparagine glycan. A disulfide bridge connects residues cysteine 142 and cysteine 172. Aspartate 170 acts as the Nucleophile in catalysis. Phosphotyrosine is present on tyrosine 186. An N-linked (GlcNAc...) asparagine glycan is attached at asparagine 192. Cysteine 202 and cysteine 223 are joined by a disulfide. 203–207 (EWPLY) is a substrate binding site. N-linked (GlcNAc...) asparagine glycosylation is present at asparagine 215. The active-site Proton donor is aspartate 231. Cysteine 378 and cysteine 382 are oxidised to a cystine.

It belongs to the glycosyl hydrolase 27 family. Homodimer.

The protein localises to the lysosome. The catalysed reaction is Hydrolysis of terminal, non-reducing alpha-D-galactose residues in alpha-D-galactosides, including galactose oligosaccharides, galactomannans and galactolipids.. The enzyme catalyses a globoside Gb3Cer (d18:1(4E)) + H2O = a beta-D-Gal-(1-&gt;4)-beta-D-Glc-(1&lt;-&gt;1)-Cer(d18:1(4E)) + D-galactose. It catalyses the reaction a globoside Gb3Cer + H2O = a beta-D-galactosyl-(1-&gt;4)-beta-D-glucosyl-(1&lt;-&gt;1)-ceramide + D-galactose. Galactosylgalactosylglucosylceramidase activity is stimulated by saposin B and ammonium chloride. In terms of biological role, catalyzes the hydrolysis of glycosphingolipids and participates in their degradation in the lysosome. This is Alpha-galactosidase A from Mus musculus (Mouse).